Here is a 420-residue protein sequence, read N- to C-terminus: Serine hydroxymethyltransferase (420 aa).

(6S)-5,6,7,8-tetrahydrofolate-binding positions include L121 and 125–127 (GHL). K229 is modified (N6-(pyridoxal phosphate)lysine).

Belongs to the SHMT family. In terms of assembly, homodimer. It depends on pyridoxal 5'-phosphate as a cofactor.

Its subcellular location is the cytoplasm. The enzyme catalyses (6R)-5,10-methylene-5,6,7,8-tetrahydrofolate + glycine + H2O = (6S)-5,6,7,8-tetrahydrofolate + L-serine. It participates in one-carbon metabolism; tetrahydrofolate interconversion. Its pathway is amino-acid biosynthesis; glycine biosynthesis; glycine from L-serine: step 1/1. In terms of biological role, catalyzes the reversible interconversion of serine and glycine with tetrahydrofolate (THF) serving as the one-carbon carrier. This reaction serves as the major source of one-carbon groups required for the biosynthesis of purines, thymidylate, methionine, and other important biomolecules. Also exhibits THF-independent aldolase activity toward beta-hydroxyamino acids, producing glycine and aldehydes, via a retro-aldol mechanism. In Pasteurella multocida (strain Pm70), this protein is Serine hydroxymethyltransferase.